Reading from the N-terminus, the 108-residue chain is MAEEKQHHRLFHHKNREEEGGPVDHKKKVKHHSHLQKIGELGAVAAGAYALHEKHKAKKDPENAHKHKIKQEIAAVAAVGAGGFAFHEHHQKKEAKKEKKAAEKGRHH.

Disordered regions lie at residues 1-34 (MAEEKQHHRLFHHKNREEEGGPVDHKKKVKHHSH) and 84-108 (FAFHEHHQKKEAKKEKKAAEKGRHH). Residues 15-24 (NREEEGGPVD) show a composition bias toward basic and acidic residues. Residues 25-34 (HKKKVKHHSH) are compositionally biased toward basic residues. Residues 95–108 (AKKEKKAAEKGRHH) show a composition bias toward basic and acidic residues.

The protein belongs to the abscisic acid and water stress-induced protein family.

This is Abscisic stress-ripening protein 3 from Solanum lycopersicum (Tomato).